We begin with the raw amino-acid sequence, 427 residues long: Histidinol dehydrogenase (427 aa).

Positions 232, 254, and 257 each coordinate substrate. The Zn(2+) site is built by Gln-254 and His-257. Active-site proton acceptor residues include Glu-322 and His-323. Residues His-323, Asp-356, Glu-410, and His-415 each contribute to the substrate site. A Zn(2+)-binding site is contributed by Asp-356. His-415 is a Zn(2+) binding site.

The protein belongs to the histidinol dehydrogenase family. Requires Zn(2+) as cofactor.

The enzyme catalyses L-histidinol + 2 NAD(+) + H2O = L-histidine + 2 NADH + 3 H(+). Its pathway is amino-acid biosynthesis; L-histidine biosynthesis; L-histidine from 5-phospho-alpha-D-ribose 1-diphosphate: step 9/9. Its function is as follows. Catalyzes the sequential NAD-dependent oxidations of L-histidinol to L-histidinaldehyde and then to L-histidine. This Listeria innocua serovar 6a (strain ATCC BAA-680 / CLIP 11262) protein is Histidinol dehydrogenase.